A 227-amino-acid chain; its full sequence is UPF0173 metal-dependent hydrolase YtkL (227 aa).

The protein belongs to the UPF0173 family.

The chain is UPF0173 metal-dependent hydrolase YtkL (ytkL) from Bacillus subtilis (strain 168).